The sequence spans 183 residues: UPF0200 protein MMP1282 (183 aa).

Residue 8–15 (GMPGSGKS) participates in ATP binding.

It belongs to the UPF0200 family.

In Methanococcus maripaludis (strain DSM 14266 / JCM 13030 / NBRC 101832 / S2 / LL), this protein is UPF0200 protein MMP1282.